A 151-amino-acid chain; its full sequence is Ribosome maturation factor RimP (151 aa).

Belongs to the RimP family.

The protein localises to the cytoplasm. Required for maturation of 30S ribosomal subunits. The sequence is that of Ribosome maturation factor RimP from Haemophilus influenzae (strain PittGG).